Here is a 100-residue protein sequence, read N- to C-terminus: Large ribosomal subunit protein uL23 (100 aa).

It belongs to the universal ribosomal protein uL23 family. Part of the 50S ribosomal subunit. Contacts protein L29, and trigger factor when it is bound to the ribosome.

Its function is as follows. One of the early assembly proteins it binds 23S rRNA. One of the proteins that surrounds the polypeptide exit tunnel on the outside of the ribosome. Forms the main docking site for trigger factor binding to the ribosome. This is Large ribosomal subunit protein uL23 from Vibrio atlanticus (strain LGP32) (Vibrio splendidus (strain Mel32)).